A 427-amino-acid chain; its full sequence is Trigger factor (427 aa).

One can recognise a PPIase FKBP-type domain in the interval 163-248; sequence GDTVVIDFVG…IHEVKEKEVP (86 aa).

The protein belongs to the FKBP-type PPIase family. Tig subfamily.

It is found in the cytoplasm. It catalyses the reaction [protein]-peptidylproline (omega=180) = [protein]-peptidylproline (omega=0). In terms of biological role, involved in protein export. Acts as a chaperone by maintaining the newly synthesized protein in an open conformation. Functions as a peptidyl-prolyl cis-trans isomerase. The sequence is that of Trigger factor from Streptococcus gordonii (strain Challis / ATCC 35105 / BCRC 15272 / CH1 / DL1 / V288).